A 1080-amino-acid polypeptide reads, in one-letter code: Carbamoyl phosphate synthase large chain (1080 aa).

A carboxyphosphate synthetic domain region spans residues 1–403; that stretch reads MPKRTDLRTI…SLQKAVRGLE (403 aa). ATP is bound by residues Arg-129, Arg-169, Gly-175, Gly-176, Glu-208, Val-210, Glu-215, Gly-241, Val-242, His-243, Gln-285, and Glu-299. The ATP-grasp 1 domain maps to 133-328; it reads RVAMQEIGLE…IAKIAAKLAV (196 aa). Mg(2+) is bound by residues Gln-285, Glu-299, and Asn-301. Positions 285, 299, and 301 each coordinate Mn(2+). An oligomerization domain region spans residues 404–554; that stretch reads TGKVGLEPTG…YSTYEEECEA (151 aa). Residues 555-942 form a carbamoyl phosphate synthetic domain region; it reads APSDRRKIMI…AFARAQEAGD (388 aa). An ATP-grasp 2 domain is found at 679 to 876; the sequence is QRLVQQLGLR…LAKIAARCMT (198 aa). Residues Arg-715, Arg-754, Leu-756, Glu-761, Gly-787, Val-788, His-789, Ser-790, Gln-830, and Glu-847 each coordinate ATP. 3 residues coordinate Mg(2+): Gln-830, Glu-847, and Asn-849. Gln-830, Glu-847, and Asn-849 together coordinate Mn(2+). The 138-residue stretch at 943-1080 folds into the MGS-like domain; the sequence is IRAPQPGRAF…LQELHKELQV (138 aa). The interval 943 to 1080 is allosteric domain; that stretch reads IRAPQPGRAF…LQELHKELQV (138 aa).

The protein belongs to the CarB family. In terms of assembly, composed of two chains; the small (or glutamine) chain promotes the hydrolysis of glutamine to ammonia, which is used by the large (or ammonia) chain to synthesize carbamoyl phosphate. Tetramer of heterodimers (alpha,beta)4. Mg(2+) serves as cofactor. The cofactor is Mn(2+).

The catalysed reaction is hydrogencarbonate + L-glutamine + 2 ATP + H2O = carbamoyl phosphate + L-glutamate + 2 ADP + phosphate + 2 H(+). It catalyses the reaction hydrogencarbonate + NH4(+) + 2 ATP = carbamoyl phosphate + 2 ADP + phosphate + 2 H(+). It participates in amino-acid biosynthesis; L-arginine biosynthesis; carbamoyl phosphate from bicarbonate: step 1/1. The protein operates within pyrimidine metabolism; UMP biosynthesis via de novo pathway; (S)-dihydroorotate from bicarbonate: step 1/3. In terms of biological role, large subunit of the glutamine-dependent carbamoyl phosphate synthetase (CPSase). CPSase catalyzes the formation of carbamoyl phosphate from the ammonia moiety of glutamine, carbonate, and phosphate donated by ATP, constituting the first step of 2 biosynthetic pathways, one leading to arginine and/or urea and the other to pyrimidine nucleotides. The large subunit (synthetase) binds the substrates ammonia (free or transferred from glutamine from the small subunit), hydrogencarbonate and ATP and carries out an ATP-coupled ligase reaction, activating hydrogencarbonate by forming carboxy phosphate which reacts with ammonia to form carbamoyl phosphate. This is Carbamoyl phosphate synthase large chain from Xylella fastidiosa (strain Temecula1 / ATCC 700964).